Reading from the N-terminus, the 476-residue chain is Argininosuccinate lyase (476 aa).

This sequence belongs to the lyase 1 family. Argininosuccinate lyase subfamily.

It is found in the cytoplasm. It catalyses the reaction 2-(N(omega)-L-arginino)succinate = fumarate + L-arginine. It functions in the pathway amino-acid biosynthesis; L-arginine biosynthesis; L-arginine from L-ornithine and carbamoyl phosphate: step 3/3. The polypeptide is Argininosuccinate lyase (Gluconacetobacter diazotrophicus (strain ATCC 49037 / DSM 5601 / CCUG 37298 / CIP 103539 / LMG 7603 / PAl5)).